We begin with the raw amino-acid sequence, 1013 residues long: Hemoglobin-binding protein A (1013 aa).

A signal peptide spans Met-1–Ala-24. Tandem repeats lie at residues Gln-26–Asn-29, Gln-30–Asn-33, Gln-34–Asn-37, Gln-38–Asn-41, Gln-42–Asn-45, Gln-46–Asn-49, Gln-50–Asn-53, and Gln-54–Asn-57. The segment at Gln-26–Asn-57 is 8 X 4 AA tandem repeats of Q-P-T-N. The span at Gln-26–Gln-58 shows a compositional bias: low complexity. The tract at residues Gln-26 to Asn-61 is disordered. The short motif at Glu-67–Ser-74 is the TonB box element. Positions Ser-78–Lys-205 constitute a TBDR plug domain. Residues Asn-213–Phe-1013 enclose the TBDR beta-barrel domain. Positions Asn-996–Phe-1013 match the TonB C-terminal box motif.

It belongs to the TonB-dependent receptor family. Hemoglobin/haptoglobin binding protein subfamily.

The protein resides in the cell outer membrane. Functionally, acts as a receptor for hemoglobin of the human host and is required for heme uptake. This is Hemoglobin-binding protein A (hgbA) from Haemophilus influenzae.